The sequence spans 307 residues: MRNRTLADLERVVALGGGHGLGRVMSSLSSLGSRLTGIVTTTDNGGSTGRIRRSEGGIAWGDTRNCLNQLITEPSVASAMFEYRFTGNGELAGHNLGNLMLKALDHLSIRPIEAINLVRSLLKVDALLIPMSEQPVDLMAIDHEGHPIYGEVNIDQLAQMPQEMLLSPPVHATREAVEAINQADVILIGPGSFLTSLMPLLLLDELTQALRRSSASMIYIGNLGRELSPAAAALSLQDKLTIMESKIGRKIIDAVIVSPTIDISGVKDRIIVQQPLEAKDIPHRHDRELLRQALENTLQQLNGADSV.

The protein belongs to the gluconeogenesis factor family.

Its subcellular location is the cytoplasm. Functionally, required for morphogenesis under gluconeogenic growth conditions. The polypeptide is Putative gluconeogenesis factor (Yersinia pestis).